A 190-amino-acid polypeptide reads, in one-letter code: Xanthine phosphoribosyltransferase (190 aa).

Xanthine-binding residues include Leu-20 and Asn-27. A 5-phospho-alpha-D-ribose 1-diphosphate-binding site is contributed by 128-132 (ANGHA). Position 156 (Lys-156) interacts with xanthine.

The protein belongs to the purine/pyrimidine phosphoribosyltransferase family. Xpt subfamily. Homodimer.

It localises to the cytoplasm. The enzyme catalyses XMP + diphosphate = xanthine + 5-phospho-alpha-D-ribose 1-diphosphate. Its pathway is purine metabolism; XMP biosynthesis via salvage pathway; XMP from xanthine: step 1/1. Functionally, converts the preformed base xanthine, a product of nucleic acid breakdown, to xanthosine 5'-monophosphate (XMP), so it can be reused for RNA or DNA synthesis. The sequence is that of Xanthine phosphoribosyltransferase from Pseudomonas aeruginosa (strain ATCC 15692 / DSM 22644 / CIP 104116 / JCM 14847 / LMG 12228 / 1C / PRS 101 / PAO1).